We begin with the raw amino-acid sequence, 504 residues long: Maturase K (504 aa).

This sequence belongs to the intron maturase 2 family. MatK subfamily.

It localises to the plastid. Its subcellular location is the chloroplast. Functionally, usually encoded in the trnK tRNA gene intron. Probably assists in splicing its own and other chloroplast group II introns. In Gossypium gossypioides (Mexican cotton), this protein is Maturase K.